The primary structure comprises 690 residues: Polyphosphate kinase (690 aa).

Asn-45 is a binding site for ATP. Residues Arg-375 and Arg-405 each contribute to the Mg(2+) site. His-435 (phosphohistidine intermediate) is an active-site residue. The ATP site is built by Tyr-468, Arg-564, and His-592.

The protein belongs to the polyphosphate kinase 1 (PPK1) family. Mg(2+) serves as cofactor. Post-translationally, an intermediate of this reaction is the autophosphorylated ppk in which a phosphate is covalently linked to a histidine residue through a N-P bond.

It catalyses the reaction [phosphate](n) + ATP = [phosphate](n+1) + ADP. Catalyzes the reversible transfer of the terminal phosphate of ATP to form a long-chain polyphosphate (polyP). This is Polyphosphate kinase from Pseudomonas aeruginosa (strain ATCC 15692 / DSM 22644 / CIP 104116 / JCM 14847 / LMG 12228 / 1C / PRS 101 / PAO1).